Consider the following 53-residue polypeptide: uncharacterized protein (53 aa).

This is an uncharacterized protein from Rickettsia conorii (strain ATCC VR-613 / Malish 7).